Here is a 248-residue protein sequence, read N- to C-terminus: MRRPIIAGNWKMHKTPSEAVKLVEELIPLVKDAKAEVVVIPPFVDLTEVARVIKGTNILLGAQNMFWEEKGAYTGEISPVMLKEIGVTYVVIGHSERRQYFKETDEMVNKKVLSALSHDLKPIVCVGESLSQREEGKTYDVVLTQTREALKGVSEEDITKVVIAYEPVWAIGTGKNATPQDANEVIKAIRNTIAELYGKDKAEMVRIQYGGSVKPDNISGFMAESDIDGALVGGASLVAEDFAKIVNY.

Residue Asn9 to Lys11 participates in substrate binding. His94 acts as the Electrophile in catalysis. Glu166 serves as the catalytic Proton acceptor. Substrate contacts are provided by residues Gly172, Ser212, and Gly233–Gly234.

This sequence belongs to the triosephosphate isomerase family. In terms of assembly, homodimer.

The protein localises to the cytoplasm. It catalyses the reaction D-glyceraldehyde 3-phosphate = dihydroxyacetone phosphate. It participates in carbohydrate biosynthesis; gluconeogenesis. It functions in the pathway carbohydrate degradation; glycolysis; D-glyceraldehyde 3-phosphate from glycerone phosphate: step 1/1. Involved in the gluconeogenesis. Catalyzes stereospecifically the conversion of dihydroxyacetone phosphate (DHAP) to D-glyceraldehyde-3-phosphate (G3P). This is Triosephosphate isomerase from Caldanaerobacter subterraneus subsp. tengcongensis (strain DSM 15242 / JCM 11007 / NBRC 100824 / MB4) (Thermoanaerobacter tengcongensis).